Here is a 476-residue protein sequence, read N- to C-terminus: Probable protein S-acyltransferase 5 (476 aa).

Basic and acidic residues predominate over residues 1-11 (MLDLQPSDRRH). A disordered region spans residues 1–21 (MLDLQPSDRRHGAPSSSGGVS). A run of 2 helical transmembrane segments spans residues 53-73 (SILI…IFVG) and 85-105 (GVSV…FLLL). A disordered region spans residues 119–138 (YPPEPESNEGNGEPRLAHTP). Residues 158–208 (KYCDTCMLYRPPRASHCSICNNCVEKFDHHCPWLGQCIGLRNYRFYFMFVL) form the DHHC domain. The active-site S-palmitoyl cysteine intermediate is the C188. 2 consecutive transmembrane segments (helical) span residues 209 to 223 (CSTL…FCWI) and 246 to 266 (SIAL…LTCF). Disordered stretches follow at residues 320 to 340 (SKEP…PSLQ) and 373 to 454 (VASR…ASRD). Residue S336 is modified to Phosphoserine. A compositionally biased stretch (basic and acidic residues) spans 387–412 (SEGRGIMHSRESSRGRGIMHSRESSR). The residue at position 418 (S418) is a Phosphoserine. Residues 425–441 (VNEDLRTRDESVSRVGE) show a composition bias toward basic and acidic residues.

It belongs to the DHHC palmitoyltransferase family.

It localises to the cell membrane. The enzyme catalyses L-cysteinyl-[protein] + hexadecanoyl-CoA = S-hexadecanoyl-L-cysteinyl-[protein] + CoA. In terms of biological role, palmitoyl acyltransferase. In Arabidopsis thaliana (Mouse-ear cress), this protein is Probable protein S-acyltransferase 5 (PAT05).